The following is a 235-amino-acid chain: Aspartate/glutamate leucyltransferase (235 aa).

It belongs to the R-transferase family. Bpt subfamily.

It is found in the cytoplasm. It carries out the reaction N-terminal L-glutamyl-[protein] + L-leucyl-tRNA(Leu) = N-terminal L-leucyl-L-glutamyl-[protein] + tRNA(Leu) + H(+). The catalysed reaction is N-terminal L-aspartyl-[protein] + L-leucyl-tRNA(Leu) = N-terminal L-leucyl-L-aspartyl-[protein] + tRNA(Leu) + H(+). Functionally, functions in the N-end rule pathway of protein degradation where it conjugates Leu from its aminoacyl-tRNA to the N-termini of proteins containing an N-terminal aspartate or glutamate. This Pseudomonas putida (strain ATCC 700007 / DSM 6899 / JCM 31910 / BCRC 17059 / LMG 24140 / F1) protein is Aspartate/glutamate leucyltransferase.